Here is a 213-residue protein sequence, read N- to C-terminus: Thiamine-phosphate synthase (213 aa).

4-amino-2-methyl-5-(diphosphooxymethyl)pyrimidine contacts are provided by residues 39–43 (QYRDK) and Asp-71. Positions 72 and 91 each coordinate Mg(2+). Residue Ser-108 coordinates 4-amino-2-methyl-5-(diphosphooxymethyl)pyrimidine. 135-137 (TDT) contributes to the 2-[(2R,5Z)-2-carboxy-4-methylthiazol-5(2H)-ylidene]ethyl phosphate binding site. Lys-138 is a 4-amino-2-methyl-5-(diphosphooxymethyl)pyrimidine binding site. Residues Gly-165 and 185–186 (VS) each bind 2-[(2R,5Z)-2-carboxy-4-methylthiazol-5(2H)-ylidene]ethyl phosphate.

Belongs to the thiamine-phosphate synthase family. It depends on Mg(2+) as a cofactor.

The catalysed reaction is 2-[(2R,5Z)-2-carboxy-4-methylthiazol-5(2H)-ylidene]ethyl phosphate + 4-amino-2-methyl-5-(diphosphooxymethyl)pyrimidine + 2 H(+) = thiamine phosphate + CO2 + diphosphate. It carries out the reaction 2-(2-carboxy-4-methylthiazol-5-yl)ethyl phosphate + 4-amino-2-methyl-5-(diphosphooxymethyl)pyrimidine + 2 H(+) = thiamine phosphate + CO2 + diphosphate. It catalyses the reaction 4-methyl-5-(2-phosphooxyethyl)-thiazole + 4-amino-2-methyl-5-(diphosphooxymethyl)pyrimidine + H(+) = thiamine phosphate + diphosphate. It participates in cofactor biosynthesis; thiamine diphosphate biosynthesis; thiamine phosphate from 4-amino-2-methyl-5-diphosphomethylpyrimidine and 4-methyl-5-(2-phosphoethyl)-thiazole: step 1/1. Condenses 4-methyl-5-(beta-hydroxyethyl)thiazole monophosphate (THZ-P) and 2-methyl-4-amino-5-hydroxymethyl pyrimidine pyrophosphate (HMP-PP) to form thiamine monophosphate (TMP). The protein is Thiamine-phosphate synthase of Thermoplasma acidophilum (strain ATCC 25905 / DSM 1728 / JCM 9062 / NBRC 15155 / AMRC-C165).